A 232-amino-acid chain; its full sequence is Biosynthetic peptidoglycan transglycosylase (232 aa).

A helical transmembrane segment spans residues 14–34 (AAVALVLLYQLWIFAHVLWWI).

The protein belongs to the glycosyltransferase 51 family.

It is found in the cell inner membrane. It catalyses the reaction [GlcNAc-(1-&gt;4)-Mur2Ac(oyl-L-Ala-gamma-D-Glu-L-Lys-D-Ala-D-Ala)](n)-di-trans,octa-cis-undecaprenyl diphosphate + beta-D-GlcNAc-(1-&gt;4)-Mur2Ac(oyl-L-Ala-gamma-D-Glu-L-Lys-D-Ala-D-Ala)-di-trans,octa-cis-undecaprenyl diphosphate = [GlcNAc-(1-&gt;4)-Mur2Ac(oyl-L-Ala-gamma-D-Glu-L-Lys-D-Ala-D-Ala)](n+1)-di-trans,octa-cis-undecaprenyl diphosphate + di-trans,octa-cis-undecaprenyl diphosphate + H(+). Its pathway is cell wall biogenesis; peptidoglycan biosynthesis. Its function is as follows. Peptidoglycan polymerase that catalyzes glycan chain elongation from lipid-linked precursors. In Thiobacillus denitrificans (strain ATCC 25259 / T1), this protein is Biosynthetic peptidoglycan transglycosylase.